Reading from the N-terminus, the 379-residue chain is CCN family member 1 (379 aa).

The first 24 residues, M1–S24, serve as a signal peptide directing secretion. An IGFBP N-terminal domain is found at T25–Q94. Intrachain disulfides connect C26–C50, C30–C52, C32–C53, C39–C56, C64–C78, and C70–C91. The VWFC domain maps to R98–D164. Phosphoserine is present on S184. The region spanning K226–G271 is the TSP type-1 domain. The segment at S277–G313 is heparin-binding. Intrachain disulfides connect C284–C321, C301–C335, C312–C351, C315–C353, and C320–C357. In terms of domain architecture, CTCK spans C284 to P358.

Belongs to the CCN family. As to quaternary structure, interaction with integrins is heparin- and cell-type-dependent and promotes cell adhesion.

It is found in the secreted. Its function is as follows. Promotes cell proliferation, chemotaxis, angiogenesis and cell adhesion. Appears to play a role in wound healing by up-regulating, in skin fibroblasts, the expression of a number of genes involved in angiogenesis, inflammation and matrix remodeling including VEGA-A, VEGA-C, MMP1, MMP3, TIMP1, uPA, PAI-1 and integrins alpha-3 and alpha-5. CCN1-mediated gene regulation is dependent on heparin-binding. Down-regulates the expression of alpha-1 and alpha-2 subunits of collagen type-1. Promotes cell adhesion and adhesive signaling through integrin alpha-6/beta-1, cell migration through integrin alpha-1/beta-5 and cell proliferation through integrin alpha-v/beta-3. This chain is CCN family member 1, found in Rattus norvegicus (Rat).